The chain runs to 770 residues: tRNA(Met) cytidine acetyltransferase TmcA 2 (770 aa).

Gln-209 and Arg-390 together coordinate ATP. An N-acetyltransferase domain is found at Met-458–Ser-608. Position 533-535 (Ile-533–Val-535) interacts with acetyl-CoA.

This sequence belongs to the TmcA family.

It localises to the cytoplasm. The enzyme catalyses cytidine(34) in elongator tRNA(Met) + acetyl-CoA + ATP + H2O = N(4)-acetylcytidine(34) in elongator tRNA(Met) + ADP + phosphate + CoA + H(+). It catalyses the reaction a cytidine in RNA + acetyl-CoA + ATP + H2O = an N(4)-acetylcytidine in RNA + ADP + phosphate + CoA + H(+). It carries out the reaction a cytidine in tRNA + acetyl-CoA + ATP + H2O = an N(4)-acetylcytidine in tRNA + ADP + phosphate + CoA + H(+). The catalysed reaction is a cytidine in mRNA + acetyl-CoA + ATP + H2O = an N(4)-acetylcytidine in mRNA + ADP + phosphate + CoA + H(+). Its function is as follows. Catalyzes the formation of N(4)-acetylcytidine (ac(4)C) at the wobble position of tRNA(Met), by using acetyl-CoA as an acetyl donor and ATP (or GTP). In terms of biological role, catalyzes the formation of 41 N(4)-acetylcytidine (ac(4)C) sites in RNA, almost always on the middle C of a CCG motif. Modifications are found mostly in tRNA, with small amounts found in rRNA and mRNA. The polypeptide is tRNA(Met) cytidine acetyltransferase TmcA 2 (Saccharolobus solfataricus (strain ATCC 35092 / DSM 1617 / JCM 11322 / P2) (Sulfolobus solfataricus)).